A 622-amino-acid chain; its full sequence is Serine/threonine-protein kinase MAK (622 aa).

The 281-residue stretch at 4-284 (YTTMRQLGDG…ASQALKHPYF (281 aa)) folds into the Protein kinase domain. ATP contacts are provided by residues 10–18 (LGDGTYGSV) and K33. The active-site Proton acceptor is D125. T157 bears the Phosphothreonine; by autocatalysis mark. At Y159 the chain carries Phosphotyrosine; by autocatalysis. Residues 301-373 (QTLHKQLQPP…HHKQPQTMFP (73 aa)) form a disordered region.

It belongs to the protein kinase superfamily. CMGC Ser/Thr protein kinase family. CDC2/CDKX subfamily. In terms of assembly, interacts with RP1. Interacts with AR and CDK20. Found in a complex containing MAK, AR and NCOA3. Interacts with FZR1 (via WD repeats). Mg(2+) is required as a cofactor. Post-translationally, autophosphorylated. Phosphorylated on serine and threonine residues. Expressed mainly in testicular cells at and after meiosis.

The protein localises to the nucleus. It is found in the cytoplasm. It localises to the cytoskeleton. The protein resides in the microtubule organizing center. Its subcellular location is the centrosome. The protein localises to the spindle. It is found in the midbody. It localises to the cell projection. The protein resides in the cilium. Its subcellular location is the photoreceptor outer segment. The protein localises to the photoreceptor inner segment. It carries out the reaction L-seryl-[protein] + ATP = O-phospho-L-seryl-[protein] + ADP + H(+). It catalyses the reaction L-threonyl-[protein] + ATP = O-phospho-L-threonyl-[protein] + ADP + H(+). Essential for the regulation of ciliary length and required for the long-term survival of photoreceptors. Could play an important function in spermatogenesis. Phosphorylates FZR1 in a cell cycle-dependent manner. Plays a role in the transcriptional coactivation of AR. The sequence is that of Serine/threonine-protein kinase MAK (Mak) from Rattus norvegicus (Rat).